A 449-amino-acid chain; its full sequence is Uridine-cytidine kinase C (449 aa).

Position 58–65 (58–65 (GPSGAGKT)) interacts with ATP. The region spanning 235-401 (NPIYILKSVK…QKSYIELYQD (167 aa)) is the CYTH domain.

It belongs to the uridine kinase family.

It catalyses the reaction uridine + ATP = UMP + ADP + H(+). The catalysed reaction is cytidine + ATP = CMP + ADP + H(+). Its pathway is pyrimidine metabolism; CTP biosynthesis via salvage pathway; CTP from cytidine: step 1/3. It functions in the pathway pyrimidine metabolism; UMP biosynthesis via salvage pathway; UMP from uridine: step 1/1. Its function is as follows. Catalyzes the conversion of uridine into uridine monophosphate and cytidine into cytidine monophosphate in the pyrimidine salvage pathway. The sequence is that of Uridine-cytidine kinase C (udkC) from Dictyostelium discoideum (Social amoeba).